Here is a 954-residue protein sequence, read N- to C-terminus: Glycine dehydrogenase (decarboxylating) (954 aa).

Lysine 704 carries the post-translational modification N6-(pyridoxal phosphate)lysine.

This sequence belongs to the GcvP family. As to quaternary structure, the glycine cleavage system is composed of four proteins: P, T, L and H. It depends on pyridoxal 5'-phosphate as a cofactor.

It catalyses the reaction N(6)-[(R)-lipoyl]-L-lysyl-[glycine-cleavage complex H protein] + glycine + H(+) = N(6)-[(R)-S(8)-aminomethyldihydrolipoyl]-L-lysyl-[glycine-cleavage complex H protein] + CO2. In terms of biological role, the glycine cleavage system catalyzes the degradation of glycine. The P protein binds the alpha-amino group of glycine through its pyridoxal phosphate cofactor; CO(2) is released and the remaining methylamine moiety is then transferred to the lipoamide cofactor of the H protein. This chain is Glycine dehydrogenase (decarboxylating), found in Agrobacterium fabrum (strain C58 / ATCC 33970) (Agrobacterium tumefaciens (strain C58)).